Reading from the N-terminus, the 1131-residue chain is Probable secreted beta-glucosidase adg3 (1131 aa).

A signal peptide spans 1–23 (MPSKIEKICLLLLGFTAASNVNA). Asparagine 58, asparagine 123, asparagine 252, asparagine 551, asparagine 593, asparagine 631, and asparagine 689 each carry an N-linked (GlcNAc...) asparagine glycan. The disordered stretch occupies residues 609 to 819 (GTTSSTSEIV…SSPISSNSVT (211 aa)). Residues 623-715 (SNSNTGSLNG…YSDPTTTITS (93 aa)) show a composition bias toward low complexity. The span at 716-725 (EVSSILSSPT) shows a compositional bias: polar residues. Over residues 726-737 (SMQSSVSRPQSS) the composition is skewed to low complexity. Residues 738–763 (GDASGFNTIFTSISQSSDGETSGYTI) show a composition bias toward polar residues. 2 stretches are compositionally biased toward low complexity: residues 764 to 773 (SSNSSQNSAS) and 780 to 819 (TSSS…NSVT). Asparagine 766, asparagine 806, and asparagine 857 each carry an N-linked (GlcNAc...) asparagine glycan. The span at 893 to 909 (STSNSGSTSYSIPSSSS) shows a compositional bias: low complexity. The tract at residues 893-918 (STSNSGSTSYSIPSSSSRNEGTTSYS) is disordered. Asparagine 920 is a glycosylation site (N-linked (GlcNAc...) asparagine). Positions 977–1027 (LTVKPESSLSSSTTSGLTSSSSTIPSSTRSESNSESASTSSASKRSSSSTS) are enriched in low complexity. The segment at 977–1031 (LTVKPESSLSSSTTSGLTSSSSTIPSSTRSESNSESASTSSASKRSSSSTSLVQS) is disordered.

The protein belongs to the SUN family.

The protein resides in the secreted. Cell surface beta-glucosidase involved in cell wall biogenesis,. The sequence is that of Probable secreted beta-glucosidase adg3 (adg3) from Schizosaccharomyces pombe (strain 972 / ATCC 24843) (Fission yeast).